Reading from the N-terminus, the 383-residue chain is Meiotically up-regulated gene 93 protein (383 aa).

Residues 75–108 form a TPR repeat; sequence KKVIWRRGLAYLRLGHPHLANRDWEHSLELDPNN.

The protein resides in the cytoplasm. Its subcellular location is the nucleus. Has a role in meiosis. The chain is Meiotically up-regulated gene 93 protein (mug93) from Schizosaccharomyces pombe (strain 972 / ATCC 24843) (Fission yeast).